Consider the following 509-residue polypeptide: Pituitary homeobox homolog Ptx1 (509 aa).

The segment covering 70–98 has biased composition (low complexity); it reads NGAGSAGSAESATTTSTALSSGSTGSSTV. Disordered regions lie at residues 70 to 125, 148 to 171, and 204 to 273; these read NGAG…SSVS, QDLV…PKHE, and LNNF…HFTS. The segment covering 227–242 has biased composition (polar residues); that stretch reads RSVNETTIKTENISSS. The span at 243–258 shows a compositional bias: basic and acidic residues; sequence GHDEPMTTSGEEPKND. Positions 259–269 are enriched in basic residues; it reads KKNKRQRRQRT. Positions 262–322 form a DNA-binding region, homeobox; that stretch reads KRQRRQRTHF…KNRRAKWRKR (61 aa). The short motif at 460-473 is the OAR element; the sequence is SSIATLRLKAKQHA. A Nuclear localization signal motif is present at residues 464–470; sequence TLRLKAK.

This sequence belongs to the paired homeobox family. Bicoid subfamily.

The protein resides in the nucleus. Appears to control physiological cell functions rather than pattern formation during embryogenesis. The polypeptide is Pituitary homeobox homolog Ptx1 (Ptx1) (Drosophila melanogaster (Fruit fly)).